We begin with the raw amino-acid sequence, 131 residues long: Fluoride-specific ion channel FluC (131 aa).

4 helical membrane-spanning segments follow: residues 10 to 30 (AAVA…SGLV), 36 to 56 (FPMG…FLTW), 71 to 91 (LATV…YETV), and 99 to 119 (VLSI…VLGG). Positions 78 and 81 each coordinate Na(+).

This sequence belongs to the fluoride channel Fluc/FEX (TC 1.A.43) family.

It is found in the cell membrane. The catalysed reaction is fluoride(in) = fluoride(out). Its activity is regulated as follows. Na(+) is not transported, but it plays an essential structural role and its presence is essential for fluoride channel function. In terms of biological role, fluoride-specific ion channel. Important for reducing fluoride concentration in the cell, thus reducing its toxicity. In Methanopyrus kandleri (strain AV19 / DSM 6324 / JCM 9639 / NBRC 100938), this protein is Fluoride-specific ion channel FluC.